The primary structure comprises 350 residues: MTVSPVALRRKTECKPHPTARYWKKCDVEALFGLPFLELVHQAAEVHRQNFNPREIQLSTLLSIKTGGCPEDCAYCPQSAHHNTNLGKEQMMDVDEIVEKAKIAKSRGASRFCMGAAWRGPKPKDVETVSAIIKAVKGLGMETCGTFGMLEEGMAEDLKEAGLDYYNHNLDTDPDRYNDIIHTRRHEDRMDTLGKVRNAGLKVCCGGIVGMNETRAERAGLIASLANLDPQPESVPINRLVKVEGTPLDDAEDLDWTEFVRTIAVARITMPQSYVRLSAGRSNMPEAMQAMCFMAGANSIFYGDKLLTTGNPDEDGDRILMEKLNLYPLQFELEGEVAEVEKASGIKVDY.

Residues 54–278 enclose the Radical SAM core domain; that stretch reads REIQLSTLLS…TMPQSYVRLS (225 aa). 3 residues coordinate [4Fe-4S] cluster: Cys-69, Cys-73, and Cys-76. Positions 113, 144, 204, and 276 each coordinate [2Fe-2S] cluster.

This sequence belongs to the radical SAM superfamily. Biotin synthase family. As to quaternary structure, homodimer. It depends on [4Fe-4S] cluster as a cofactor. [2Fe-2S] cluster serves as cofactor.

It catalyses the reaction (4R,5S)-dethiobiotin + (sulfur carrier)-SH + 2 reduced [2Fe-2S]-[ferredoxin] + 2 S-adenosyl-L-methionine = (sulfur carrier)-H + biotin + 2 5'-deoxyadenosine + 2 L-methionine + 2 oxidized [2Fe-2S]-[ferredoxin]. Its pathway is cofactor biosynthesis; biotin biosynthesis; biotin from 7,8-diaminononanoate: step 2/2. Catalyzes the conversion of dethiobiotin (DTB) to biotin by the insertion of a sulfur atom into dethiobiotin via a radical-based mechanism. This is Biotin synthase from Neisseria meningitidis serogroup C (strain 053442).